The chain runs to 527 residues: MPGVANPGPSKSRRETADSSSRKKVHFSSIHDAVRAGDVKQLSDIVERGANLNEVDALHQFTPLHWAAHSGSLECLHWLLWSGADATQTTTRGWTAAHIAAIRGQDACLQALIINGANLATQDDRGCTPLHLAATHGHSFSLQIMLRSGVDPSVTDKREWKPVHYASFHGRLGCLQLLVKWGCGIEDVDYNGNLPVHLAAMEGHLHCLKFLLSRMNSATQALKAFNDNGENVLDLAQRFLKQNVVEFIQGAQYEGSHPDDHDDLAFPGHVAAFKGDLEVLKKLIGDGVINLNERDDNGSTPMHKAAGQGHIDCLQWLIEMGAESNITNKAGETPSDVAKRFAHLAAVKLLEGLQKYEIDDIESDKDHINFFTRHGVEGSTDAKDDLCLSESDKANARMRAHKKIVELRQLLEIAESNFKHLGGITEEDLKQKKEQLESKKTINELQGQLAYERLRREKLECQLDEYRVEVDQLKETLQKIQVTSVAAMEDDSCESSKEKRRVKKKVSPGGVFVRSYQRIRTSISSQV.

The disordered stretch occupies residues 1–27 (MPGVANPGPSKSRRETADSSSRKKVHF). Over residues 12 to 21 (SRRETADSSS) the composition is skewed to basic and acidic residues. ANK repeat units follow at residues 25-54 (VHFS…NLNE), 59-88 (HQFT…DATQ), 92-121 (RGWT…NLAT), 125-154 (RGCT…DPSV), 158-187 (REWK…GIED), 191-220 (NGNL…SATQ), 228-257 (NGEN…EGSH), 263-293 (DLAF…NLNE), 297-326 (NGST…ESNI), and 330-360 (AGET…EIDD). The stretch at 395–484 (NARMRAHKKI…ETLQKIQVTS (90 aa)) forms a coiled coil.

In Mus musculus (Mouse), this protein is Ankyrin repeat domain-containing protein 42 (Ankrd42).